The sequence spans 319 residues: Carbonic anhydrase 6 (319 aa).

The N-terminal stretch at M1–A14 is a signal peptide. One can recognise an Alpha-carbonic anhydrase domain in the interval H16–F273. C37 and C219 are joined by a disulfide. The N-linked (GlcNAc...) asparagine glycan is linked to N62. The Proton donor/acceptor role is filled by H80. H106, H108, and H133 together coordinate Zn(2+). T215–T216 is a substrate binding site. N251 is a glycosylation site (N-linked (GlcNAc...) asparagine).

Belongs to the alpha-carbonic anhydrase family. It depends on Zn(2+) as a cofactor. Major constituent of saliva.

It is found in the secreted. It catalyses the reaction hydrogencarbonate + H(+) = CO2 + H2O. Functionally, reversible hydration of carbon dioxide. Its role in saliva is unknown. This chain is Carbonic anhydrase 6 (CA6), found in Bos taurus (Bovine).